Reading from the N-terminus, the 620-residue chain is Kelch-like protein 32 (620 aa).

The BTB domain maps to 42 to 109; that stretch reads CDITLIAEEQ…AYTGQILLEP (68 aa). Kelch repeat units lie at residues 290-346, 347-398, 399-446, 447-494, 496-547, and 549-599; these read TLYI…VMGD, FLFV…AMEE, YLYA…VADG, LLWI…AVQR, LYVL…VHNG, and IYLV…FLPA.

This chain is Kelch-like protein 32 (KLHL32), found in Homo sapiens (Human).